The following is a 626-amino-acid chain: MASLCSNSSTTSLKTPFTSLGSTPKPCQLFLHGKRNKAFKVSCKVTNTNGNQDETNSVDRRNVLLGLGGLYGVANAIPLAASAAPTPPPDLSSCSIARIDENQVVSYSCCAPKPDDMEKVPYYKFPSMTKLRVRQPAHEADEEYIAKYNCAVTKMKDLDKTQPDNPIGFKQQANIHCAYCNGGYSIDGKVLQVHNSWLFFPFHRWYLYFYERILGSLIDDPTFGLPFWNWDHPKGMRFPPMFDVPGTALYDERRGDQIHNGNGIDLGYFGDQVETTQLQLMTNNLTLMYRQLVTNSPCPLMSLVDLTLFGSTVEDAGTVENIPHSPVHIWVGTRRGSVLPVGKISNGEDMGNFYSAGLDPLFYCHHSNVDRMWNEWKATGGKRTDIQNKDWLNSEFFFYDENGNPFKVRVRDCLDTKKMGYDYHATATPWRNFKPKTKASAGKVNTGSIPPESQVFPLAKLDKAISFSINRPASSRTQQEKNAQEEVLTFNAIKYDNRDYIRFDVFLNVDNNVNANELDKAEFAGSYTSLPHVHRVGDPKHTATATLRLAITELLEDIGLEDEDTIAVTLVPKKGDISIGGVEIKLAIVKLVCVVNLLTLQLNKDRFCYDSVFVCWFVCLFFNFHV.

The N-terminal 83 residues, 1 to 83 (MASLCSNSST…ANAIPLAASA (83 aa)), are a transit peptide targeting the chloroplast. 2 disulfide bridges follow: Cys94–Cys110 and Cys109–Cys177. His176, His194, His203, His324, His328, and His366 together coordinate Cu cation. The segment at residues 180-194 (CNGGYSIDGKVLQVH) is a cross-link (2'-(S-cysteinyl)-histidine (Cys-His)).

The protein belongs to the tyrosinase family. It depends on Cu(2+) as a cofactor.

Its subcellular location is the plastid. It localises to the chloroplast thylakoid lumen. The enzyme catalyses 2 catechol + O2 = 2 1,2-benzoquinone + 2 H2O. Its function is as follows. Catalyzes the oxidation of mono- and o-diphenols to o-diquinones. This Solanum lycopersicum (Tomato) protein is Polyphenol oxidase C, chloroplastic.